The chain runs to 318 residues: MFMINILTLILPILLAVAFLTLVERKILGYMQFRKGPNIVGPHGLLQPFADAIKLFTKEPLRPATSSTTMFIIAPVLALALALTMWSPLPMPYPLINMNLGVLFMLAMSSLAVYSILWSGWASNSKYALIGALRAVAQTISYEVTLAIILLSVLLMNGSYTLSTLATTQEQLWLLFPSWPLAMMWFISTLAETNRAPFDLTEGESELVSGFNVEYAAGPFALFFLAEYANIIMMNMFTAILFLGTFHNPCNPELYTTNLIIKTLLLTMSFLWIRASYPRFRYDQLMHLLWKNFLPLTLALCMWHISLPIMTASIPPQT.

8 consecutive transmembrane segments (helical) span residues 2-22 (FMIN…FLTL), 70-90 (MFII…SPLP), 100-120 (LGVL…LWSG), 136-156 (VAQT…VLLM), 172-192 (LWLL…TLAE), 222-242 (LFFL…AILF), 253-273 (ELYT…FLWI), and 294-314 (LPLT…TASI).

It belongs to the complex I subunit 1 family. In terms of assembly, core subunit of respiratory chain NADH dehydrogenase (Complex I) which is composed of 45 different subunits.

Its subcellular location is the mitochondrion inner membrane. The enzyme catalyses a ubiquinone + NADH + 5 H(+)(in) = a ubiquinol + NAD(+) + 4 H(+)(out). Its function is as follows. Core subunit of the mitochondrial membrane respiratory chain NADH dehydrogenase (Complex I) which catalyzes electron transfer from NADH through the respiratory chain, using ubiquinone as an electron acceptor. Essential for the catalytic activity and assembly of complex I. The polypeptide is NADH-ubiquinone oxidoreductase chain 1 (MT-ND1) (Balaenoptera musculus (Blue whale)).